The primary structure comprises 633 residues: Threonine--tRNA ligase (633 aa).

The TGS domain occupies 1-61; sequence MINVYFSDNS…TEDCKFEVIT (61 aa). The catalytic stretch occupies residues 242–533; that stretch reads DHRKIGKELE…LIEHHSGKLP (292 aa). Cysteine 333, histidine 384, and histidine 510 together coordinate Zn(2+).

This sequence belongs to the class-II aminoacyl-tRNA synthetase family. Homodimer. Zn(2+) is required as a cofactor.

Its subcellular location is the cytoplasm. It carries out the reaction tRNA(Thr) + L-threonine + ATP = L-threonyl-tRNA(Thr) + AMP + diphosphate + H(+). In terms of biological role, catalyzes the attachment of threonine to tRNA(Thr) in a two-step reaction: L-threonine is first activated by ATP to form Thr-AMP and then transferred to the acceptor end of tRNA(Thr). Also edits incorrectly charged L-seryl-tRNA(Thr). This is Threonine--tRNA ligase from Ehrlichia ruminantium (strain Welgevonden).